Consider the following 200-residue polypeptide: Ras-related protein Rab-10 (200 aa).

GTP is bound by residues Ser18, Gly19, Val20, Gly21, Lys22, Thr23, Cys24, Asn35, Thr36, Ser40, and Thr41. Thr23 lines the Mg(2+) pocket. Short sequence motifs (switch) lie at residues 32 to 46 and 64 to 81; these read DAFNTTFISTIEIDF and DTAGQERFHTITTSYYRG. The Mg(2+) site is built by Thr41 and Asp64. Gly67 lines the GTP pocket. At Thr73 the chain carries Phosphothreonine. N6-acetyllysine is present on Lys102. Lys102 is covalently cross-linked (Glycyl lysine isopeptide (Lys-Gly) (interchain with G-Cter in ubiquitin)). Residues Asn122, Lys123, Asp125, and Met126 each contribute to the GTP site. Lys136 is covalently cross-linked (Glycyl lysine isopeptide (Lys-Gly) (interchain with G-Cter in ubiquitin)). GTP contacts are provided by Ser152, Ala153, and Lys154. Lys154 participates in a covalent cross-link: Glycyl lysine isopeptide (Lys-Gly) (interchain with G-Cter in ubiquitin). S-geranylgeranyl cysteine attachment occurs at residues Cys199 and Cys200.

This sequence belongs to the small GTPase superfamily. Rab family. As to quaternary structure, interacts with MYO5A; mediates the transport to the plasma membrane of SLC2A4/GLUT4 storage vesicles. Interacts with GDI1 and with GDI2; negatively regulates RAB10 association with membranes and activation. Interacts (GDP-bound form) with LLGL1; the interaction is direct and promotes RAB10 association with membranes and activation through competition with the Rab inhibitor GDI1. Interacts with EXOC4; probably associates with the exocyst. Interacts (GTP-bound form) with MICALCL, MICAL1, MICAL3, EHBP1 and EHBP1L1; at least in case of MICAL1 two molecules of RAB10 can bind to one molecule of MICAL1. Interacts with TBC1D13. Interacts with SEC16A. Interacts with CHM. Interacts with LRRK2; interaction facilitates phosphorylation of Thr-73. Interacts with RILPL1 and RILPL2 when phosphorylated on Thr-73. Interacts with TBC1D21. Interacts with MARCKS. The cofactor is Mg(2+). In terms of processing, phosphorylation of Thr-73 in the switch II region by LRRK2 prevents the association of RAB regulatory proteins, including CHM and RAB GDP dissociation inhibitors GDI1 and GDI2. Phosphorylation of Thr-73 by LRRK2 is stimulated by RAB29 and RAB32. Phosphorylation by LRRK2 is required for localization to stressed lysosomes. As to expression, highest levels in neural and muscle tissues.

The protein resides in the cytoplasmic vesicle membrane. The protein localises to the golgi apparatus. It localises to the trans-Golgi network membrane. Its subcellular location is the endosome membrane. It is found in the recycling endosome membrane. The protein resides in the cytoplasmic vesicle. The protein localises to the phagosome membrane. It localises to the cell projection. Its subcellular location is the cilium. It is found in the endoplasmic reticulum membrane. The protein resides in the cytoplasm. The protein localises to the perinuclear region. It localises to the lysosome. The enzyme catalyses GTP + H2O = GDP + phosphate + H(+). Regulated by guanine nucleotide exchange factors (GEFs) DENND4C and RABIF which promote the exchange of bound GDP for free GTP. Regulated by GTPase activating proteins (GAPs) including TBC1D21 which increase the GTP hydrolysis activity. Inhibited by GDP dissociation inhibitors GDI1 and GDI2 which prevent Rab-GDP dissociation. Functionally, the small GTPases Rab are key regulators of intracellular membrane trafficking, from the formation of transport vesicles to their fusion with membranes. Rabs cycle between an inactive GDP-bound form and an active GTP-bound form that is able to recruit to membranes different set of downstream effectors directly responsible for vesicle formation, movement, tethering and fusion. That Rab is mainly involved in the biosynthetic transport of proteins from the Golgi to the plasma membrane. Regulates, for instance, SLC2A4/GLUT4 glucose transporter-enriched vesicles delivery to the plasma membrane. In parallel, it regulates the transport of TLR4, a toll-like receptor to the plasma membrane and therefore may be important for innate immune response. Also plays a specific role in asymmetric protein transport to the plasma membrane. In neurons, it is involved in axonogenesis through regulation of vesicular membrane trafficking toward the axonal plasma membrane. In epithelial cells, it regulates transport from the Golgi to the basolateral membrane. May play a role in the basolateral recycling pathway and in phagosome maturation. May play a role in endoplasmic reticulum dynamics and morphology controlling tubulation along microtubules and tubules fusion. Together with LRRK2, RAB8A, and RILPL1, it regulates ciliogenesis. When phosphorylated by LRRK2 on Thr-73, it binds RILPL1 and inhibits ciliogenesis. Participates in the export of a subset of neosynthesized proteins through a Rab8-Rab10-Rab11-dependent endososomal export route. Targeted to and stabilized on stressed lysosomes through LRRK2 phosphorylation where it promotes the extracellular release of lysosomal content through EHBP1 and EHNP1L1 effector proteins. This chain is Ras-related protein Rab-10, found in Rattus norvegicus (Rat).